A 498-amino-acid chain; its full sequence is ATP synthase subunit beta, chloroplastic (498 aa).

172–179 (GGAGVGKT) contributes to the ATP binding site.

The protein belongs to the ATPase alpha/beta chains family. In terms of assembly, F-type ATPases have 2 components, CF(1) - the catalytic core - and CF(0) - the membrane proton channel. CF(1) has five subunits: alpha(3), beta(3), gamma(1), delta(1), epsilon(1). CF(0) has four main subunits: a(1), b(1), b'(1) and c(9-12).

Its subcellular location is the plastid. It is found in the chloroplast thylakoid membrane. It carries out the reaction ATP + H2O + 4 H(+)(in) = ADP + phosphate + 5 H(+)(out). Its function is as follows. Produces ATP from ADP in the presence of a proton gradient across the membrane. The catalytic sites are hosted primarily by the beta subunits. This is ATP synthase subunit beta, chloroplastic from Drimys granadensis.